A 355-amino-acid polypeptide reads, in one-letter code: Peptide chain release factor 1 (355 aa).

Gln230 is subject to N5-methylglutamine.

This sequence belongs to the prokaryotic/mitochondrial release factor family. Post-translationally, methylated by PrmC. Methylation increases the termination efficiency of RF1.

It is found in the cytoplasm. Its function is as follows. Peptide chain release factor 1 directs the termination of translation in response to the peptide chain termination codons UAG and UAA. The protein is Peptide chain release factor 1 of Geobacter metallireducens (strain ATCC 53774 / DSM 7210 / GS-15).